The chain runs to 22 residues: Mu-conotoxin GIIIB (22 aa).

3 disulfides stabilise this stretch: C3–C15, C4–C20, and C10–C21. A 4-hydroxyproline; partial mark is found at P6 and P7. At P17 the chain carries 4-hydroxyproline. Position 22 is an alanine amide (A22).

Belongs to the conotoxin M superfamily. In terms of tissue distribution, expressed by the venom duct.

Its subcellular location is the secreted. Its function is as follows. Mu-conotoxins block voltage-gated sodium channels (Nav). The sequence is that of Mu-conotoxin GIIIB from Conus geographus (Geography cone).